Here is a 610-residue protein sequence, read N- to C-terminus: Zinc metalloproteinase-disintegrin-like bothropasin (610 aa).

The first 20 residues, 1–20 (MIEVLLVTICLAAFPYQGSS), serve as a signal peptide directing secretion. The propeptide occupies 21–191 (IILESGNVND…ASQLVVTAEQ (171 aa)). Residue Gln-192 is modified to Pyrrolidone carboxylic acid. One can recognise a Peptidase M12B domain in the interval 198–394 (RYVELFIVVD…ENPQCILNEP (197 aa)). Glu-201 and Asp-285 together coordinate Ca(2+). 3 cysteine pairs are disulfide-bonded: Cys-309-Cys-389, Cys-349-Cys-373, and Cys-351-Cys-356. His-334 serves as a coordination point for Zn(2+). Residue Glu-335 is part of the active site. Residues His-338 and His-344 each contribute to the Zn(2+) site. Asn-372 carries an N-linked (GlcNAc...) asparagine glycan. 8 residues coordinate Ca(2+): Cys-389, Asn-392, Val-404, Asn-407, Leu-409, Glu-411, Glu-414, and Asp-417. Residues 402–488 (PPVCGNELLE…ECPADVFHKN (87 aa)) enclose the Disintegrin domain. 22 disulfide bridges follow: Cys-405–Cys-424, Cys-405–Cys-434, Cys-416–Cys-429, Cys-416–Cys-434, Cys-418–Cys-424, Cys-428–Cys-451, Cys-442–Cys-448, Cys-447–Cys-473, Cys-460–Cys-480, Cys-467–Cys-492, Cys-467–Cys-499, Cys-492–Cys-504, Cys-499–Cys-504, Cys-511–Cys-526, Cys-511–Cys-561, Cys-526–Cys-572, Cys-539–Cys-549, Cys-549–Cys-556, Cys-556–Cys-598, Cys-561–Cys-572, Cys-592–Cys-603, and Cys-598–Cys-603. A D/ECD-tripeptide motif is present at residues 466–468 (ECD). Asp-468, Pro-469, Glu-471, Asp-483, and Val-484 together coordinate Ca(2+).

The protein belongs to the venom metalloproteinase (M12B) family. P-III subfamily. P-IIIb sub-subfamily. Monomer. It depends on Zn(2+) as a cofactor. As to expression, expressed by the venom gland.

It localises to the secreted. The enzyme catalyses Cleavage of 5-His-|-Leu-6, 10-His-|-Leu-11, 14-Ala-|-Leu-15, 16-Tyr-|-Leu-17 and 24-Phe-|-Phe-25 in insulin B chain.. With respect to regulation, inhibited by EDTA and EGTA. Its function is as follows. Has caseinolytic activity. Causes hemorrhage on rabbit skin and causes myonecrosis in mouse tibialis anterior muscle. In terms of biological role, inhibits platelet aggregation. This is Zinc metalloproteinase-disintegrin-like bothropasin from Bothrops jararaca (Jararaca).